The chain runs to 443 residues: MIQQDPGALYSDHLAVLFRRAEQALARGGFDHLVVPSGTLHYQVFDDRDYPYAVNPQFKAWLPLTRVPNSWIVFTPGKRPAVLFHQPFDYWHVVPDAPSGWWVEHFDIHIIRKPEEALALLPADPSRCAILGEPQSALGSYVPNNPAPVVNYLEWHRGSKTPYEIALMRQAQVLGVRGHRAAEAAFRNGADEFSIHMAYCQAVGQDATELPYGNIVALNEHAAVLHYTELGRKAPQPLRSFLIDAGASAHGYASDITRTYAARGHDEFAAMIAAVDAAQQQMCAAVRPGFDYKQLHVDAHLSLMGVLKDFGVIKVSPQTALETGVSAAFFPHGIGHLIGLQVHDVAGFAASDEGGRIERPAGHPYLRLTRVLEPGMVVTIEPGLYFIDMLLNEVKDAGHGDAINWDRVDFFRPYGGIRIEDEVLCTEGEADNLTRPVFAAANG.

Positions 244, 255, 336, 381, and 420 each coordinate Mn(2+).

The protein belongs to the peptidase M24B family. Bacterial-type prolidase subfamily. The cofactor is Mn(2+).

The catalysed reaction is Xaa-L-Pro dipeptide + H2O = an L-alpha-amino acid + L-proline. Functionally, splits dipeptides with a prolyl residue in the C-terminal position. The chain is Xaa-Pro dipeptidase from Stenotrophomonas maltophilia (strain R551-3).